Consider the following 406-residue polypeptide: Exo-alpha-sialidase (406 aa).

Residues 1-20 (MQSMRFMILALLVQFLPAWA) form the signal peptide. Substrate is bound by residues Arg-59, Arg-78, Asp-84, and Gln-148. An N-linked (GlcNAc...) asparagine glycan is attached at Asn-235. Substrate is bound by residues Arg-265, Arg-322, 322–323 (RR), 331–332 (YD), Lys-337, Tyr-358, Asp-376, and 376–378 (DFF). An N-linked (GlcNAc...) asparagine glycan is attached at Asn-396.

Belongs to the glycosyl hydrolase 33 family.

It catalyses the reaction Hydrolysis of alpha-(2-&gt;3)-, alpha-(2-&gt;6)-, alpha-(2-&gt;8)- glycosidic linkages of terminal sialic acid residues in oligosaccharides, glycoproteins, glycolipids, colominic acid and synthetic substrates.. Sialidase is able to release sialic acid from a wide variety of natural substrates including bovine salivary mucin, colominic acid, bovine fetuin, a serum glycoprotein containing both alpha-2-6 and alpha-2-3-linkages in a ratio of about 3:2, and glycoproteins and glycolipids from thermally denatured human lung epithelial cells. Does not show any trans-sialidase activity since it is able to remove terminal sialic acid residues but is unable to catalyze their transfer to the acceptor substrate. 2-keto-3-deoxynononic acid (KDN) is the preferred substrate and A.fumigatus can utilize KDN as a sole carbon source. This is Exo-alpha-sialidase from Aspergillus fumigatus (strain ATCC MYA-4609 / CBS 101355 / FGSC A1100 / Af293) (Neosartorya fumigata).